We begin with the raw amino-acid sequence, 299 residues long: Taste receptor type 2 member 50 (299 aa).

M1 is a topological domain (extracellular). A helical transmembrane segment spans residues 2–22 (VTFLHIFFSILILVLFVLGNF). At 23–55 (ANGFIALVNFIDLVKRKKISSADQILTALAVSR) the chain is on the cytoplasmic side. Residues 56–76 (IGLLWALLLNWYLTVLNPAFY) traverse the membrane as a helical segment. At 77 to 87 (SVELRITSYNA) the chain is on the extracellular side. The helical transmembrane segment at 88–108 (WVVTNHFSMWLAASLSIFYLL) threads the bilayer. Residues 109-126 (KIANFSNLIFLHLKRRVR) lie on the Cytoplasmic side of the membrane. The helical transmembrane segment at 127–147 (SVILVILLGPLTFLVCHLFVA) threads the bilayer. At 148–181 (NMDESMSAEEYEGNMTGKLKLRNTVHLSYLTVTT) the chain is on the extracellular side. N-linked (GlcNAc...) asparagine glycosylation occurs at N161. Residues 182–202 (LWSFIPFTLSLISFLMLICSL) form a helical membrane-spanning segment. Residues 203 to 229 (CKHVKKMQLHGEGSQDLSTKVHIKALQ) lie on the Cytoplasmic side of the membrane. A helical membrane pass occupies residues 230 to 250 (TLISFLLLCAIFFLFLIISIW). The Extracellular portion of the chain corresponds to 251-259 (NPRRLQNDP). A helical membrane pass occupies residues 260–280 (VVVVSKAVGNIYLALDSFILI). The Cytoplasmic portion of the chain corresponds to 281–299 (WRTKKLKHTFLLILCQIRC).

The protein belongs to the G-protein coupled receptor T2R family.

The protein resides in the membrane. Functionally, receptor that may play a role in the perception of bitterness and is gustducin-linked. May play a role in sensing the chemical composition of the gastrointestinal content. The activity of this receptor may stimulate alpha gustducin, mediate PLC-beta-2 activation and lead to the gating of TRPM5. This is Taste receptor type 2 member 50 (TAS2R50) from Pongo pygmaeus (Bornean orangutan).